The primary structure comprises 418 residues: Tyrosine--tRNA ligase (418 aa).

Position 35 (Tyr35) interacts with L-tyrosine. The 'HIGH' region signature appears at 40-49 (PTAKSLHIGH). Tyr168 and Gln172 together coordinate L-tyrosine. Residues 228–232 (KYGKT) carry the 'KMSKS' region motif. An ATP-binding site is contributed by Lys231. Positions 352 to 410 (PTVVGAMVAAGVVDTKSGGRRAVAEGGAYLNNVKVADPDQRLTDDDFLCGRVALVRRGK) constitute an S4 RNA-binding domain.

The protein belongs to the class-I aminoacyl-tRNA synthetase family. TyrS type 1 subfamily. Homodimer.

The protein localises to the cytoplasm. It carries out the reaction tRNA(Tyr) + L-tyrosine + ATP = L-tyrosyl-tRNA(Tyr) + AMP + diphosphate + H(+). Functionally, catalyzes the attachment of tyrosine to tRNA(Tyr) in a two-step reaction: tyrosine is first activated by ATP to form Tyr-AMP and then transferred to the acceptor end of tRNA(Tyr). This is Tyrosine--tRNA ligase from Cutibacterium acnes (strain DSM 16379 / KPA171202) (Propionibacterium acnes).